A 29-amino-acid chain; its full sequence is Cytochrome b6-f complex subunit 8 (29 aa).

A helical transmembrane segment spans residues 3-23; that stretch reads IVDIAWAALMVVFTFSLSLVV.

Belongs to the PetN family. The 4 large subunits of the cytochrome b6-f complex are cytochrome b6, subunit IV (17 kDa polypeptide, PetD), cytochrome f and the Rieske protein, while the 4 small subunits are PetG, PetL, PetM and PetN. The complex functions as a dimer.

It is found in the plastid. It localises to the chloroplast thylakoid membrane. Its function is as follows. Component of the cytochrome b6-f complex, which mediates electron transfer between photosystem II (PSII) and photosystem I (PSI), cyclic electron flow around PSI, and state transitions. In Gnetum parvifolium (Small-leaved jointfir), this protein is Cytochrome b6-f complex subunit 8.